Here is a 225-residue protein sequence, read N- to C-terminus: Platelet-derived growth factor subunit B (225 aa).

A signal peptide spans 1–12 (LPLCCYLRLVSA). Residues 13–73 (EGDPIPEELY…ESESSSRGRR (61 aa)) constitute a propeptide, removed in mature form. A glycan (N-linked (GlcNAc...) asparagine) is linked at asparagine 55. Disulfide bonds link cysteine 89/cysteine 133, cysteine 122/cysteine 170, and cysteine 126/cysteine 172. Residues 183–225 (RSPGTSREHRAKTPQTRVTVRTVRIRRPPKGKHRKFKHTHDKK) constitute a propeptide, removed in mature form.

It belongs to the PDGF/VEGF growth factor family. Antiparallel homodimer; disulfide-linked. Antiparallel heterodimer with PDGFA; disulfide-linked. The PDGFB homodimer interacts with PDGFRA and PDGFRB homodimers, and with heterodimers formed by PDGFRA and PDGFRB. The heterodimer composed of PDGFA and PDGFB interacts with PDGFRB homodimers, and with heterodimers formed by PDGFRA and PDGFRB. Interacts with XLKD1. Interacts with LRP1. Interacts with SORL1 (via the N-terminal ectodomain). Interacts with CD82; this interaction inhibits PDGFB-mediated signaling pathway. In terms of tissue distribution, expressed in a distinct subpopulation of smooth muscle cells in injured arteries.

Its subcellular location is the secreted. Its function is as follows. Growth factor that plays an essential role in the regulation of embryonic development, cell proliferation, cell migration, survival and chemotaxis. Potent mitogen for cells of mesenchymal origin. Required for normal proliferation and recruitment of pericytes and vascular smooth muscle cells in the central nervous system, skin, lung, heart and placenta. Required for normal blood vessel development, and for normal development of kidney glomeruli. Plays an important role in wound healing. Signaling is modulated by the formation of heterodimers with PDGFA. This chain is Platelet-derived growth factor subunit B (Pdgfb), found in Rattus norvegicus (Rat).